The chain runs to 620 residues: Chaperone protein HscA homolog (620 aa).

Belongs to the heat shock protein 70 family.

In terms of biological role, chaperone involved in the maturation of iron-sulfur cluster-containing proteins. Has a low intrinsic ATPase activity which is markedly stimulated by HscB. This chain is Chaperone protein HscA homolog, found in Shewanella loihica (strain ATCC BAA-1088 / PV-4).